Here is a 361-residue protein sequence, read N- to C-terminus: Serine/threonine-protein kinase SRK2B (361 aa).

The 257-residue stretch at 4–260 (YELVKDIGAG…IGDIKKHPWF (257 aa)) folds into the Protein kinase domain. ATP-binding positions include 10 to 18 (IGAGNFGVA) and K33. D123 serves as the catalytic Proton acceptor. S154 carries the post-translational modification Phosphoserine. A disordered region spans residues 311–361 (AFGWGGGEDAEGKEEDAEEEVEEVEEEEDEEDEYDKTVKQVHASMGEVRVS). The span at 318–344 (EDAEGKEEDAEEEVEEVEEEEDEEDEY) shows a compositional bias: acidic residues.

The protein belongs to the protein kinase superfamily. Ser/Thr protein kinase family. Expressed in seedlings.

The catalysed reaction is L-seryl-[protein] + ATP = O-phospho-L-seryl-[protein] + ADP + H(+). It carries out the reaction L-threonyl-[protein] + ATP = O-phospho-L-threonyl-[protein] + ADP + H(+). The sequence is that of Serine/threonine-protein kinase SRK2B (SRK2B) from Arabidopsis thaliana (Mouse-ear cress).